Reading from the N-terminus, the 421-residue chain is Histidine--tRNA ligase (421 aa).

It belongs to the class-II aminoacyl-tRNA synthetase family. In terms of assembly, homodimer.

The protein resides in the cytoplasm. It carries out the reaction tRNA(His) + L-histidine + ATP = L-histidyl-tRNA(His) + AMP + diphosphate + H(+). This Francisella tularensis subsp. tularensis (strain SCHU S4 / Schu 4) protein is Histidine--tRNA ligase.